The chain runs to 844 residues: Eukaryotic translation elongation factor 2 (844 aa).

The tr-type G domain maps to 17–348 (RNIRNMSVIA…MIAIHLPSPV (332 aa)). Position 26–33 (26–33 (AHVDHGKS)) interacts with GTP. Phosphothreonine occurs at positions 57 and 59. GTP is bound by residues 162 to 165 (NKMD) and 219 to 221 (SGL). Histidine 701 is modified (diphthamide).

This sequence belongs to the TRAFAC class translation factor GTPase superfamily. Classic translation factor GTPase family. EF-G/EF-2 subfamily. Phosphorylation by EF-2 kinase completely inactivates eEF2.

Its subcellular location is the cytoplasm. The catalysed reaction is GTP + H2O = GDP + phosphate + H(+). In terms of biological role, catalyzes the GTP-dependent ribosomal translocation step during translation elongation. During this step, the ribosome changes from the pre-translocational (PRE) to the post-translocational (POST) state as the newly formed A-site-bound peptidyl-tRNA and P-site-bound deacylated tRNA move to the P and E sites, respectively. Catalyzes the coordinated movement of the two tRNA molecules, the mRNA and conformational changes in the ribosome. The sequence is that of Eukaryotic translation elongation factor 2 from Drosophila melanogaster (Fruit fly).